The following is a 210-amino-acid chain: Large ribosomal subunit protein uL3 (210 aa).

A disordered region spans residues 133-156; it reads ASHGNSLSHRVPGSIGQNQTPGKV. The residue at position 151 (Gln151) is an N5-methylglutamine.

Belongs to the universal ribosomal protein uL3 family. In terms of assembly, part of the 50S ribosomal subunit. Forms a cluster with proteins L14 and L19. In terms of processing, methylated by PrmB.

Functionally, one of the primary rRNA binding proteins, it binds directly near the 3'-end of the 23S rRNA, where it nucleates assembly of the 50S subunit. The polypeptide is Large ribosomal subunit protein uL3 (Hamiltonella defensa subsp. Acyrthosiphon pisum (strain 5AT)).